We begin with the raw amino-acid sequence, 896 residues long: Alanine--tRNA ligase (896 aa).

Residues His-574, His-578, Cys-677, and His-681 each contribute to the Zn(2+) site.

This sequence belongs to the class-II aminoacyl-tRNA synthetase family. Zn(2+) is required as a cofactor.

It is found in the cytoplasm. The catalysed reaction is tRNA(Ala) + L-alanine + ATP = L-alanyl-tRNA(Ala) + AMP + diphosphate. Its function is as follows. Catalyzes the attachment of alanine to tRNA(Ala) in a two-step reaction: alanine is first activated by ATP to form Ala-AMP and then transferred to the acceptor end of tRNA(Ala). Also edits incorrectly charged Ser-tRNA(Ala) and Gly-tRNA(Ala) via its editing domain. The chain is Alanine--tRNA ligase from Mycoplasma capricolum subsp. capricolum (strain California kid / ATCC 27343 / NCTC 10154).